The following is a 483-amino-acid chain: Islet cell autoantigen 1 (483 aa).

The 204-residue stretch at 51–254 (ASDADLDAKL…TSHTMAAIHE (204 aa)) folds into the AH domain. Residues 281–321 (EEKKKINQQESTDAAVQEPSQLISLEEENQRKESSSFKTED) are disordered. The span at 288 to 303 (QQESTDAAVQEPSQLI) shows a compositional bias: polar residues. The segment covering 308–321 (ENQRKESSSFKTED) has biased composition (basic and acidic residues).

Expressed abundantly in pancreas, heart and brain with low levels of expression in lung, kidney, liver and thyroid.

Its subcellular location is the cytoplasm. The protein localises to the cytosol. It is found in the golgi apparatus membrane. The protein resides in the cytoplasmic vesicle. It localises to the secretory vesicle membrane. Its subcellular location is the secretory vesicle. The protein localises to the synaptic vesicle membrane. May play a role in neurotransmitter secretion. The sequence is that of Islet cell autoantigen 1 (ICA1) from Homo sapiens (Human).